The chain runs to 169 residues: Gamma-crystallin 2 (169 aa).

2 Beta/gamma crystallin 'Greek key' domains span residues 1-34 (YEDR…KVDS) and 35-77 (GCWM…KVIP). Residues 78–82 (QQKGP) form a connecting peptide region. Beta/gamma crystallin 'Greek key' domains are found at residues 83–123 (HKMK…NVLE) and 124–166 (GHWI…RRVL).

This sequence belongs to the beta/gamma-crystallin family. In terms of assembly, monomer.

Functionally, crystallins are the dominant structural components of the vertebrate eye lens. In Rana temporaria (European common frog), this protein is Gamma-crystallin 2.